Reading from the N-terminus, the 300-residue chain is 33 kDa chaperonin (300 aa).

2 disulfides stabilise this stretch: C235/C237 and C269/C272.

The protein belongs to the HSP33 family. In terms of processing, under oxidizing conditions two disulfide bonds are formed involving the reactive cysteines. Under reducing conditions zinc is bound to the reactive cysteines and the protein is inactive.

Its subcellular location is the cytoplasm. In terms of biological role, redox regulated molecular chaperone. Protects both thermally unfolding and oxidatively damaged proteins from irreversible aggregation. Plays an important role in the bacterial defense system toward oxidative stress. This is 33 kDa chaperonin from Pseudomonas fluorescens (strain SBW25).